The chain runs to 509 residues: Probable cytochrome P450 4ac3 (509 aa).

C454 lines the heme pocket.

This sequence belongs to the cytochrome P450 family. Heme is required as a cofactor.

It localises to the endoplasmic reticulum membrane. The protein localises to the microsome membrane. Functionally, may be involved in the metabolism of insect hormones and in the breakdown of synthetic insecticides. This Drosophila melanogaster (Fruit fly) protein is Probable cytochrome P450 4ac3 (Cyp4ac3).